The following is a 151-amino-acid chain: Nucleoside diphosphate kinase (151 aa).

ATP is bound by residues Lys11, Phe59, Arg87, Thr93, Arg104, and Asn114. Residue His117 is the Pros-phosphohistidine intermediate of the active site.

It belongs to the NDK family. Homohexamer. Mg(2+) serves as cofactor.

It carries out the reaction a 2'-deoxyribonucleoside 5'-diphosphate + ATP = a 2'-deoxyribonucleoside 5'-triphosphate + ADP. It catalyses the reaction a ribonucleoside 5'-diphosphate + ATP = a ribonucleoside 5'-triphosphate + ADP. Major role in the synthesis of nucleoside triphosphates other than ATP. The ATP gamma phosphate is transferred to the NDP beta phosphate via a ping-pong mechanism, using a phosphorylated active-site intermediate. The polypeptide is Nucleoside diphosphate kinase (Ginglymostoma cirratum (Nurse shark)).